Here is a 554-residue protein sequence, read N- to C-terminus: Glutamine--tRNA ligase (554 aa).

Residues 34 to 44 (PEPNGYLHIGH) carry the 'HIGH' region motif. ATP-binding positions include 35–37 (EPN) and 41–47 (HIGHAKS). The L-glutamine site is built by D67 and Y212. Residues T231, 261–262 (RL), and 269–271 (MSK) each bind ATP. A 'KMSKS' region motif is present at residues 268-272 (VMSKR).

It belongs to the class-I aminoacyl-tRNA synthetase family. Monomer.

It localises to the cytoplasm. It catalyses the reaction tRNA(Gln) + L-glutamine + ATP = L-glutaminyl-tRNA(Gln) + AMP + diphosphate. The chain is Glutamine--tRNA ligase from Shigella boydii serotype 4 (strain Sb227).